Reading from the N-terminus, the 197-residue chain is Shikimate kinase (197 aa).

15 to 20 (GSGKSS) serves as a coordination point for ATP. Ser19 provides a ligand contact to Mg(2+). Substrate is bound by residues Asp37, Arg61, and Gly83. Residue Arg121 participates in ATP binding. Residue Arg148 coordinates substrate.

This sequence belongs to the shikimate kinase family. As to quaternary structure, monomer. Mg(2+) is required as a cofactor.

It is found in the cytoplasm. The catalysed reaction is shikimate + ATP = 3-phosphoshikimate + ADP + H(+). It participates in metabolic intermediate biosynthesis; chorismate biosynthesis; chorismate from D-erythrose 4-phosphate and phosphoenolpyruvate: step 5/7. Catalyzes the specific phosphorylation of the 3-hydroxyl group of shikimic acid using ATP as a cosubstrate. The chain is Shikimate kinase from Chlorobium phaeovibrioides (strain DSM 265 / 1930) (Prosthecochloris vibrioformis (strain DSM 265)).